A 381-amino-acid polypeptide reads, in one-letter code: Cytochrome b (381 aa).

Helical transmembrane passes span 33 to 53, 77 to 98, 113 to 133, and 178 to 198; these read FGSL…FLAM, WLLR…FLHV, WNIG…GYVL, and FFAF…VHLL. 2 residues coordinate heme b: His83 and His97. Positions 182 and 196 each coordinate heme b. His201 lines the a ubiquinone pocket. The next 4 helical transmembrane spans lie at 226-246, 288-308, 320-340, and 347-367; these read IKDA…ALFS, LGGV…PLLH, VSQT…WIGG, and FIII…VMMP.

It belongs to the cytochrome b family. The cytochrome bc1 complex contains 11 subunits: 3 respiratory subunits (MT-CYB, CYC1 and UQCRFS1), 2 core proteins (UQCRC1 and UQCRC2) and 6 low-molecular weight proteins (UQCRH/QCR6, UQCRB/QCR7, UQCRQ/QCR8, UQCR10/QCR9, UQCR11/QCR10 and a cleavage product of UQCRFS1). This cytochrome bc1 complex then forms a dimer. Heme b serves as cofactor.

The protein localises to the mitochondrion inner membrane. Its function is as follows. Component of the ubiquinol-cytochrome c reductase complex (complex III or cytochrome b-c1 complex) that is part of the mitochondrial respiratory chain. The b-c1 complex mediates electron transfer from ubiquinol to cytochrome c. Contributes to the generation of a proton gradient across the mitochondrial membrane that is then used for ATP synthesis. The chain is Cytochrome b (MT-CYB) from Dasyurus hallucatus (Northern quoll).